Reading from the N-terminus, the 265-residue chain is uncharacterized protein (265 aa).

A helical transmembrane segment spans residues 1-21 (MAFNNSTIIIIIVIAFAFFLI). N-linked (GlcNAc...) asparagine; by host glycosylation is found at asparagine 74 and asparagine 142.

It localises to the host membrane. It is found in the virion. This is an uncharacterized protein from Acanthamoeba polyphaga mimivirus (APMV).